The primary structure comprises 338 residues: Nucleoid-associated protein CGSHiGG_07705 (338 aa).

The protein belongs to the YejK family.

It is found in the cytoplasm. The protein localises to the nucleoid. This chain is Nucleoid-associated protein CGSHiGG_07705, found in Haemophilus influenzae (strain PittGG).